The primary structure comprises 283 residues: tRNA-cytidine(32) 2-sulfurtransferase (283 aa).

The PP-loop motif signature appears at 37 to 42; the sequence is SGGKDS. C112, C115, and C203 together coordinate [4Fe-4S] cluster.

The protein belongs to the TtcA family. As to quaternary structure, homodimer. Requires Mg(2+) as cofactor. [4Fe-4S] cluster serves as cofactor.

The protein resides in the cytoplasm. It catalyses the reaction cytidine(32) in tRNA + S-sulfanyl-L-cysteinyl-[cysteine desulfurase] + AH2 + ATP = 2-thiocytidine(32) in tRNA + L-cysteinyl-[cysteine desulfurase] + A + AMP + diphosphate + H(+). Its pathway is tRNA modification. Functionally, catalyzes the ATP-dependent 2-thiolation of cytidine in position 32 of tRNA, to form 2-thiocytidine (s(2)C32). The sulfur atoms are provided by the cysteine/cysteine desulfurase (IscS) system. The sequence is that of tRNA-cytidine(32) 2-sulfurtransferase from Legionella pneumophila (strain Paris).